We begin with the raw amino-acid sequence, 152 residues long: Endoribonuclease YbeY (152 aa).

Residues His114, His118, and His124 each contribute to the Zn(2+) site.

The protein belongs to the endoribonuclease YbeY family. It depends on Zn(2+) as a cofactor.

It is found in the cytoplasm. In terms of biological role, single strand-specific metallo-endoribonuclease involved in late-stage 70S ribosome quality control and in maturation of the 3' terminus of the 16S rRNA. In Wigglesworthia glossinidia brevipalpis, this protein is Endoribonuclease YbeY.